The following is a 158-amino-acid chain: Transcription elongation factor GreA (158 aa).

Residues 4-75 adopt a coiled-coil conformation; it reads EKTYPMTQEG…TQLENMIRNA (72 aa).

This sequence belongs to the GreA/GreB family.

Necessary for efficient RNA polymerase transcription elongation past template-encoded arresting sites. The arresting sites in DNA have the property of trapping a certain fraction of elongating RNA polymerases that pass through, resulting in locked ternary complexes. Cleavage of the nascent transcript by cleavage factors such as GreA or GreB allows the resumption of elongation from the new 3'terminus. GreA releases sequences of 2 to 3 nucleotides. The protein is Transcription elongation factor GreA of Bacillus cereus (strain ATCC 10987 / NRS 248).